A 338-amino-acid chain; its full sequence is Fructose-1,6-bisphosphatase class 1 (338 aa).

Mg(2+) contacts are provided by glutamate 94, aspartate 116, leucine 118, and aspartate 119. Residues 119 to 122 (DGSS), asparagine 210, and lysine 276 each bind substrate. Glutamate 282 is a Mg(2+) binding site.

It belongs to the FBPase class 1 family. In terms of assembly, homotetramer. It depends on Mg(2+) as a cofactor.

It is found in the cytoplasm. The catalysed reaction is beta-D-fructose 1,6-bisphosphate + H2O = beta-D-fructose 6-phosphate + phosphate. It participates in carbohydrate biosynthesis; gluconeogenesis. The polypeptide is Fructose-1,6-bisphosphatase class 1 (Paraburkholderia phytofirmans (strain DSM 17436 / LMG 22146 / PsJN) (Burkholderia phytofirmans)).